The primary structure comprises 285 residues: Glutamate racemase (285 aa).

Residues 28 to 29 (DS) and 60 to 61 (YG) contribute to the substrate site. Cysteine 92 (proton donor/acceptor) is an active-site residue. Residue 93-94 (NT) coordinates substrate. Cysteine 204 (proton donor/acceptor) is an active-site residue. 205 to 206 (TH) is a binding site for substrate.

The protein belongs to the aspartate/glutamate racemases family.

The catalysed reaction is L-glutamate = D-glutamate. It functions in the pathway cell wall biogenesis; peptidoglycan biosynthesis. Functionally, provides the (R)-glutamate required for cell wall biosynthesis. This Escherichia coli (strain UTI89 / UPEC) protein is Glutamate racemase.